Reading from the N-terminus, the 173-residue chain is Probable chemoreceptor glutamine deamidase CheD 2 (173 aa).

This sequence belongs to the CheD family.

It carries out the reaction L-glutaminyl-[protein] + H2O = L-glutamyl-[protein] + NH4(+). Probably deamidates glutamine residues to glutamate on methyl-accepting chemotaxis receptors (MCPs), playing an important role in chemotaxis. This chain is Probable chemoreceptor glutamine deamidase CheD 2, found in Albidiferax ferrireducens (strain ATCC BAA-621 / DSM 15236 / T118) (Rhodoferax ferrireducens).